The chain runs to 248 residues: NADP-dependent 3-hydroxy acid dehydrogenase YdfG (248 aa).

Residues 7-12, 32-33, 54-55, and N81 each bind NADP(+); these read GATAGF, RR, and DV. S134 contributes to the substrate binding site. Residues Y147, K151, and 177–185 each bind NADP(+); that span reads PGLVGGTEF. Y147 (proton acceptor) is an active-site residue.

The protein belongs to the short-chain dehydrogenases/reductases (SDR) family. Homotetramer.

The enzyme catalyses 3-hydroxypropanoate + NADP(+) = 3-oxopropanoate + NADPH + H(+). It catalyses the reaction L-allo-threonine + NADP(+) = aminoacetone + CO2 + NADPH. In terms of biological role, NADP-dependent dehydrogenase with broad substrate specificity acting on 3-hydroxy acids. Catalyzes the NADP-dependent oxidation of L-allo-threonine to L-2-amino-3-keto-butyrate, which is spontaneously decarboxylated into aminoacetone. Also acts on D-threonine, L-serine, D-serine, D-3-hydroxyisobutyrate, L-3-hydroxyisobutyrate, D-glycerate and L-glycerate. Able to catalyze the reduction of the malonic semialdehyde to 3-hydroxypropionic acid. YdfG is apparently supplementing RutE, the presumed malonic semialdehyde reductase involved in pyrimidine degradation since both are able to detoxify malonic semialdehyde. This chain is NADP-dependent 3-hydroxy acid dehydrogenase YdfG, found in Escherichia coli (strain K12).